The chain runs to 347 residues: sn-1 oleoyl-lipid 12-desaturase (347 aa).

A run of 2 helical transmembrane segments spans residues 41–63 (AWSR…AIAP) and 67–85 (LLPV…FVIG). A Histidine box-1 motif is present at residues 86-90 (HDCGH). The chain crosses the membrane as a helical span at residues 98–118 (WVNNLVGHLAFLPLIYPFHSW). The short motif at 122-126 (HNHHH) is the Histidine box-2 element. The next 3 membrane-spanning stretches (helical) occupy residues 164–184 (LWWL…FAFE), 196–216 (LFVI…LGVW), and 218–238 (VVKF…TFTL). The short motif at 286 to 290 (HHLST) is the Histidine box-3 element.

The protein belongs to the fatty acid desaturase type 2 family. It depends on Fe(2+) as a cofactor.

The protein resides in the membrane. The catalysed reaction is a 1-[(9Z)-octadecenoyl]-2-acyl-glycerolipid + 2 reduced [2Fe-2S]-[ferredoxin] + O2 + 2 H(+) = a 1-[(9Z,12Z)-octadecdienoyl]-2-acyl-glycerolipid + 2 oxidized [2Fe-2S]-[ferredoxin] + 2 H2O. It functions in the pathway lipid metabolism; polyunsaturated fatty acid biosynthesis. Its function is as follows. Desaturase involved in fatty acid biosynthesis. Introduces a double bond at carbon 12 of oleoyl groups (18:1) attached to the sn-1 position of the glycerol moiety of membrane glycerolipids. Can also efficiently catalyze the desaturation of palmitoleic acid (16:1) in vitro. The sequence is that of sn-1 oleoyl-lipid 12-desaturase from Picosynechococcus sp. (strain ATCC 27264 / PCC 7002 / PR-6) (Agmenellum quadruplicatum).